The following is a 218-amino-acid chain: Probable nicotinate-nucleotide adenylyltransferase (218 aa).

This sequence belongs to the NadD family.

It carries out the reaction nicotinate beta-D-ribonucleotide + ATP + H(+) = deamido-NAD(+) + diphosphate. The protein operates within cofactor biosynthesis; NAD(+) biosynthesis; deamido-NAD(+) from nicotinate D-ribonucleotide: step 1/1. Functionally, catalyzes the reversible adenylation of nicotinate mononucleotide (NaMN) to nicotinic acid adenine dinucleotide (NaAD). This Burkholderia cenocepacia (strain ATCC BAA-245 / DSM 16553 / LMG 16656 / NCTC 13227 / J2315 / CF5610) (Burkholderia cepacia (strain J2315)) protein is Probable nicotinate-nucleotide adenylyltransferase.